Here is a 182-residue protein sequence, read N- to C-terminus: Ribosome-recycling factor (182 aa).

A disordered region spans residues 136–156 (VKKQEKDGDFSEDQSRDEQDS).

The protein belongs to the RRF family.

Its subcellular location is the cytoplasm. Its function is as follows. Responsible for the release of ribosomes from messenger RNA at the termination of protein biosynthesis. May increase the efficiency of translation by recycling ribosomes from one round of translation to another. The protein is Ribosome-recycling factor of Synechococcus sp. (strain CC9902).